The following is a 1028-amino-acid chain: Contactin-6 (1028 aa).

A signal peptide spans 1-19; sequence MRLLWKLVILLPLINSSAG. 6 consecutive Ig-like C2-type domains span residues 26–117, 122–208, 227–308, 318–402, 408–495, and 499–587; these read PIFT…AKLQ, EDFE…RSVQ, PKIE…RNLA, PEWE…AELR, PDFS…GSLI, and RTVI…ESLS. 6 disulfide bridges follow: Cys50–Cys100, Cys144–Cys196, Cys249–Cys297, Cys339–Cys386, Cys431–Cys479, and Cys521–Cys577. Residues Asn65 and Asn193 are each glycosylated (N-linked (GlcNAc...) asparagine). 3 N-linked (GlcNAc...) asparagine glycosylation sites follow: Asn368, Asn377, and Asn468. 4 consecutive Fibronectin type-III domains span residues 600–698, 703–800, 805–901, and 902–996; these read PPED…TKAS, APVN…SGED, APRG…TKKS, and PPSQ…KMSS. N-linked (GlcNAc...) asparagine glycans are attached at residues Asn659, Asn765, Asn860, and Asn865. Tyr882 bears the Phosphotyrosine mark. The span at 887–902 shows a compositional bias: polar residues; that stretch reads TGPSSPPVNVTTKKSP. Residues 887 to 908 are disordered; it reads TGPSSPPVNVTTKKSPPSQPPA. N-linked (GlcNAc...) asparagine glycosylation is found at Asn895, Asn931, Asn956, and Asn957. Residue Ser999 is the site of GPI-anchor amidated serine attachment. Residues 1000–1028 constitute a propeptide, removed in mature form; sequence RGIQFLEPSTHFLSIVIVIFHCFAIQPLI.

Belongs to the immunoglobulin superfamily. Contactin family. In terms of assembly, interacts with PTPRG. As to expression, expressed in nervous system. Highly expressed in cerebellum. Expressed at intermediate level in thalamus, subthalamic nucleus. Weakly expressed in corpus callosum, caudate nucleus and spinal cord.

It localises to the cell membrane. Functionally, contactins mediate cell surface interactions during nervous system development. Participates in oligodendrocytes generation by acting as a ligand of NOTCH1. Its association with NOTCH1 promotes NOTCH1 activation through the released notch intracellular domain (NICD) and subsequent translocation to the nucleus. Involved in motor coordination. The chain is Contactin-6 (CNTN6) from Homo sapiens (Human).